Reading from the N-terminus, the 124-residue chain is Large ribosomal subunit protein bL12 (124 aa).

The protein belongs to the bacterial ribosomal protein bL12 family. As to quaternary structure, homodimer. Part of the ribosomal stalk of the 50S ribosomal subunit. Forms a multimeric L10(L12)X complex, where L10 forms an elongated spine to which 2 to 4 L12 dimers bind in a sequential fashion. Binds GTP-bound translation factors.

In terms of biological role, forms part of the ribosomal stalk which helps the ribosome interact with GTP-bound translation factors. Is thus essential for accurate translation. The polypeptide is Large ribosomal subunit protein bL12 (Borreliella burgdorferi (strain ZS7) (Borrelia burgdorferi)).